Reading from the N-terminus, the 365-residue chain is MLDQKDNLLSSYNYDLPNELIAQSPTKSRHDAKLMIVKDGLDDSLNLVHAKVWDIKDILKPADLLVVNNTRVVKARLKIRLSGGGAGELLLMEPRGDGRWLCLGRPARRMRGGDQLWLDMSRDNSLILKVIDKDERTGGRIIQFSNEFTSWTEMENILDLCGEVPLPPYIDKDKSSDHEESYQTRFASKPGAIAAPTAGLHLSDELIENLKTRGIKIAQITLHVGLGTFRPLEKEDLSQLHLHSEWIEVTEETIKAITNCKEDGGKVFAVGTTSVRALEAAYLSGRGALKPYEGKVDLVIKPGFKFSVIDGLLTNFHLPKSSLLLLVSALIGRKRMLKLYKQAISNKYRFFSYGDAMLITPESVI.

This sequence belongs to the QueA family. Monomer.

It localises to the cytoplasm. The enzyme catalyses 7-aminomethyl-7-carbaguanosine(34) in tRNA + S-adenosyl-L-methionine = epoxyqueuosine(34) in tRNA + adenine + L-methionine + 2 H(+). The protein operates within tRNA modification; tRNA-queuosine biosynthesis. Functionally, transfers and isomerizes the ribose moiety from AdoMet to the 7-aminomethyl group of 7-deazaguanine (preQ1-tRNA) to give epoxyqueuosine (oQ-tRNA). The chain is S-adenosylmethionine:tRNA ribosyltransferase-isomerase from Prochlorococcus marinus (strain NATL2A).